The primary structure comprises 621 residues: uncharacterized protein (621 aa).

Disordered regions lie at residues 92 to 134 (FRNS…QINQ) and 268 to 310 (KINH…DDEI). The segment covering 94-134 (NSSNQSSQSNQVNQSNQSSPSSQISPSSQVNKFNQSSQINQ) has biased composition (low complexity). A compositionally biased stretch (acidic residues) spans 296–310 (TNDETNDETDNDDEI). A coiled-coil region spans residues 354–401 (ANKIQNKIIQIVETLNAYKNKQSQIAIEAKNKIKHITVSNKEVSENIE).

This is an uncharacterized protein from Acanthamoeba polyphaga mimivirus (APMV).